We begin with the raw amino-acid sequence, 372 residues long: Alpha-L-fucosidase 3 (372 aa).

Positions 1 to 23 are cleaved as a signal peptide; the sequence is MNPILSSLFALSLLSSLSPSTHA. Serine 37 serves as the catalytic Nucleophile. Asparagine 96, asparagine 114, asparagine 139, and asparagine 182 each carry an N-linked (GlcNAc...) asparagine glycan. Active-site residues include aspartate 345 and histidine 348.

The protein belongs to the 'GDSL' lipolytic enzyme family. In terms of tissue distribution, high expression in younger leaves and in the apical region of the inflorescence stem.

The protein resides in the secreted. The protein localises to the extracellular space. Its subcellular location is the apoplast. The catalysed reaction is an alpha-L-fucoside + H2O = L-fucose + an alcohol. Functionally, hydrolyzes alpha-1,2-linked fucose. Also active on fucosylated xyloglucan oligosaccharides. The chain is Alpha-L-fucosidase 3 (FXG1) from Arabidopsis thaliana (Mouse-ear cress).